The following is a 532-amino-acid chain: Intercellular adhesion molecule 1 (532 aa).

Residues 1-27 form the signal peptide; it reads MAPSGPQPALPILVVLLGALLLGPGNA. Topologically, residues 28 to 480 are extracellular; that stretch reads QTSVFPPEVI…TVNVLSPRYE (453 aa). Ig-like C2-type domains lie at 41 to 103 and 128 to 193; these read GGSV…QSSA and GKNL…LDLR. Residue Asn-47 is glycosylated (N-linked (GlcNAc...) asparagine). 2 disulfides stabilise this stretch: Cys-48–Cys-92 and Cys-52–Cys-96. N-linked (GlcNAc...) asparagine glycans are attached at residues Asn-130 and Asn-145. Residues Cys-135 and Cys-186 are joined by a disulfide bond. A Cell attachment site; atypical motif is present at residues 152–154; it reads RGE. N-linked (GlcNAc...) asparagine glycans are attached at residues Asn-183, Asn-202, Asn-267, Asn-296, and Asn-316. The 68-residue stretch at 230-297 folds into the Ig-like C2-type 3 domain; it reads DTQGTVVCSL…LLCGVMLGNQ (68 aa). Cys-237 and Cys-290 are oxidised to a cystine. The Ig-like C2-type 4 domain maps to 325-378; the sequence is GTEVIVECEAHPRAKVMLNGVPAQPPGPRAQFLLKATPEDNGRSFSCSATLEVA. Cys-332 and Cys-371 are joined by a disulfide. 2 N-linked (GlcNAc...) asparagine glycosylation sites follow: Asn-385 and Asn-406. Disulfide bonds link Cys-403/Cys-419, Cys-419/Cys-457, and Cys-431/Cys-457. The Ig-like C2-type 5 domain maps to 412–464; that stretch reads NSQQTPMCQAWGNPLPQLKCLKDGTFPLPIGQSVTVTRDLEGTYLCQARSTRG. The chain crosses the membrane as a helical span at residues 481–503; that stretch reads VVIIPVVAAAVILGTAGVATYLY. At 504–532 the chain is on the cytoplasmic side; that stretch reads NRQRKIRKYRLQQAQNGTPMKPNTQATPP. The interval 513–532 is disordered; it reads RLQQAQNGTPMKPNTQATPP. Positions 515-532 are enriched in polar residues; the sequence is QQAQNGTPMKPNTQATPP. Thr-521 and Thr-530 each carry phosphothreonine.

This sequence belongs to the immunoglobulin superfamily. ICAM family. As to quaternary structure, homodimer. Interacts with MUC1 and promotes cell aggregation in epithelial cells. Interacts with ARHGEF26/SGEF. Interacts (on T cell side) with CD81, CD247 and CD9 at immunological synapses between antigen-presenting cells and T cells. Monoubiquitinated, which is promoted by MARCH9 and leads to endocytosis.

It localises to the membrane. In terms of biological role, ICAM proteins are ligands for the leukocyte adhesion protein LFA-1 (integrin alpha-L/beta-2). During leukocyte trans-endothelial migration, ICAM1 engagement promotes the assembly of endothelial apical cups through ARHGEF26/SGEF and RHOG activation. The chain is Intercellular adhesion molecule 1 (ICAM1) from Macaca mulatta (Rhesus macaque).